We begin with the raw amino-acid sequence, 676 residues long: Nicastrin (676 aa).

A signal peptide spans 1–28 (MAMGLIRLLSIAFTLVLLSILPLHLSLA). Residues 29–644 (DEITSIESVP…VYTVQHSAYD (616 aa)) lie on the Extracellular side of the membrane. Residues Asn-58, Asn-336, Asn-371, Asn-444, Asn-480, Asn-555, and Asn-611 are each glycosylated (N-linked (GlcNAc...) asparagine). A helical transmembrane segment spans residues 645–665 (NAVLVAGITVTTLAYIGILAA). The Cytoplasmic segment spans residues 666-676 (KSIITKALKQD).

The protein belongs to the nicastrin family. As to quaternary structure, probable component of the gamma-secretase complex, a complex composed of a presenilin homodimer, nicastrin, APH1 and PEN2.

It localises to the membrane. Its function is as follows. Probable subunit of the gamma-secretase complex, an endoprotease complex that catalyzes the intramembrane cleavage of integral membrane proteins such as Notch. The polypeptide is Nicastrin (Arabidopsis thaliana (Mouse-ear cress)).